We begin with the raw amino-acid sequence, 152 residues long: MNKITNNVTIWIKPKTVEKKWYVIDAADRVLGKVAVDVVRILRGKHKAYYTPHQDLGDNVIVINASKVRLTGKKYQQKLYYRHSRYPGGLYSDTFRTLSERKPCAPLEIAIKGMLPKGPLGRGLFRNLKVFSGSEHTLKAQNPVKLEANLER.

It belongs to the universal ribosomal protein uL13 family. As to quaternary structure, part of the 50S ribosomal subunit.

Its function is as follows. This protein is one of the early assembly proteins of the 50S ribosomal subunit, although it is not seen to bind rRNA by itself. It is important during the early stages of 50S assembly. This is Large ribosomal subunit protein uL13 from Borreliella afzelii (strain PKo) (Borrelia afzelii).